The chain runs to 614 residues: Vitamin B12 transporter BtuB (614 aa).

Residues 1-20 (MIKKASLLTACSVTAFSAWA) form the signal peptide. The TonB box motif lies at 26 to 33 (DTLVVTAI). The 115-residue stretch at 38-152 (PRSTVLAPTT…IGGVVNIITT (115 aa)) folds into the TBDR plug domain. Cyanocob(III)alamin is bound by residues leucine 83, serine 85, asparagine 92, and 110-111 (VS). The TBDR beta-barrel domain occupies 155 to 614 (EPGTEISAGW…EYTLSGSYTF (460 aa)). The next 3 membrane-spanning stretches (beta stranded) occupy residues 158–165 (TEISAGWG), 169–178 (YQNYDVSTQQ), and 184–195 (TRVTLLGDYAHT). The Ca(2+) site is built by aspartate 199, glutamine 211, aspartate 213, and aspartate 215. A run of 2 beta stranded transmembrane segments spans residues 217–227 (FLSKTLYGALE) and 232–248 (DAWSGFVRGYGYDNRTN). The Ca(2+) site is built by tyrosine 249 and aspartate 250. Alanine 251 serves as a coordination point for cyanocob(III)alamin. Aspartate 261 serves as a coordination point for Ca(2+). Transmembrane regions (beta stranded) follow at residues 263–277 (RKLYSQSWDAGLRYN), 279–296 (ELIKSQLITSYSHSKDYN), 309–325 (TLDEMKQYTVQWANNVI), 328–337 (HGSIGAGVDW), 353–369 (YDQRNTGIYLTGLQQVG), 371–381 (FTFEGAARSDD), 385–400 (FGRHGTWQTSAGWEFI), 403–417 (YRFIASYGTSYKAPN), 434–443 (KSKQWEGAFE), 449–458 (VNWRISGYRN), 473–490 (YYNEGKARIKGVEATANF), 494–509 (PLTHTVSYDYVDARNA), 517–529 (RRAKQQVKYQLDW), and 535–550 (DWGITYQYLGTRYDKD). Threonine 309 contributes to the cyanocob(III)alamin binding site. A cyanocob(III)alamin-binding site is contributed by arginine 517. Tyrosine 551 serves as a coordination point for cyanocob(III)alamin. 3 beta stranded membrane-spanning segments follow: residues 558-572 (TVKMGGVSLWDLAVA), 585-596 (IANLFDKDYETV), and 602-614 (AGREYTLSGSYTF). A TonB C-terminal box motif is present at residues 597–614 (YGYQTAGREYTLSGSYTF).

It belongs to the TonB-dependent receptor family. BtuB (TC 1.B.14.3.1) subfamily.

Its subcellular location is the cell outer membrane. Functionally, involved in the active translocation of vitamin B12 (cyanocobalamin) across the outer membrane to the periplasmic space. It derives its energy for transport by interacting with the trans-periplasmic membrane protein TonB. The protein is Vitamin B12 transporter BtuB of Shigella flexneri serotype 5b (strain 8401).